The sequence spans 153 residues: D-aminoacyl-tRNA deacylase (153 aa).

Residues 142–143 carry the Gly-cisPro motif, important for rejection of L-amino acids motif; the sequence is GP.

It belongs to the DTD family. As to quaternary structure, homodimer.

Its subcellular location is the cytoplasm. The enzyme catalyses glycyl-tRNA(Ala) + H2O = tRNA(Ala) + glycine + H(+). The catalysed reaction is a D-aminoacyl-tRNA + H2O = a tRNA + a D-alpha-amino acid + H(+). An aminoacyl-tRNA editing enzyme that deacylates mischarged D-aminoacyl-tRNAs. Also deacylates mischarged glycyl-tRNA(Ala), protecting cells against glycine mischarging by AlaRS. Acts via tRNA-based rather than protein-based catalysis; rejects L-amino acids rather than detecting D-amino acids in the active site. By recycling D-aminoacyl-tRNA to D-amino acids and free tRNA molecules, this enzyme counteracts the toxicity associated with the formation of D-aminoacyl-tRNA entities in vivo and helps enforce protein L-homochirality. The polypeptide is D-aminoacyl-tRNA deacylase (Cupriavidus taiwanensis (strain DSM 17343 / BCRC 17206 / CCUG 44338 / CIP 107171 / LMG 19424 / R1) (Ralstonia taiwanensis (strain LMG 19424))).